The primary structure comprises 226 residues: Xanthocillin biosynthesis cluster protein F (226 aa).

It functions in the pathway secondary metabolite biosynthesis. Its function is as follows. Part of the gene cluster that mediates the biosynthesis of the isocyanide xanthocillin and its derivatives. The first step of the pathway consists in the conversion of tyrosine into a vinyl-isonitrile intermediate by the isocyanide synthase xanB. Subsequent oxidative dimerization of this intermediate to form xanthocillin may involve the cytochrome P450 monooxygenase xanG, whose expression is coregulated with that of XanB. Xanthocillin can be further modified by the isonitrile hydratase-like protein xanA which introduces N-formyl groups and the methyltransferase xanE which introduces methyl groups, leading to the production of several derivatives including fumiformamide. Finally, fumiformamide can be subject to both oxidative and reductive cyclization to yield melanocins E and F, respectively. The protein is Xanthocillin biosynthesis cluster protein F of Aspergillus fumigatus (strain ATCC MYA-4609 / CBS 101355 / FGSC A1100 / Af293) (Neosartorya fumigata).